We begin with the raw amino-acid sequence, 172 residues long: Large ribosomal subunit protein uL10 (172 aa).

The protein belongs to the universal ribosomal protein uL10 family. Part of the ribosomal stalk of the 50S ribosomal subunit. The N-terminus interacts with L11 and the large rRNA to form the base of the stalk. The C-terminus forms an elongated spine to which L12 dimers bind in a sequential fashion forming a multimeric L10(L12)X complex.

Functionally, forms part of the ribosomal stalk, playing a central role in the interaction of the ribosome with GTP-bound translation factors. The sequence is that of Large ribosomal subunit protein uL10 from Rhizobium johnstonii (strain DSM 114642 / LMG 32736 / 3841) (Rhizobium leguminosarum bv. viciae).